The chain runs to 160 residues: MTDQQAEARSYLSEEMIAEFKAAFDMFDADGGGDISVKELGTVMRMLGQTPTKEELDAIIEEVDEDGSGTIDFEEFLVMMVRQMKEDAKGKSEEELAECFRIFDRNADGYIDPEELAEIFRASGEHVTDEEIESLMKDGDKNNDGRIDFDEFLKMMEGVQ.

T2 is subject to N-acetylthreonine. 4 consecutive EF-hand domains span residues E15 to T50, P51 to E86, K91 to H126, and V127 to Q160. 19 residues coordinate Ca(2+): D28, D30, D34, E39, D64, D66, S68, T70, E75, D104, N106, D108, Y110, E115, D140, N142, D144, R146, and E151.

It belongs to the troponin C family.

Troponin is the central regulatory protein of striated muscle contraction. Tn consists of three components: Tn-I which is the inhibitor of actomyosin ATPase, Tn-T which contains the binding site for tropomyosin and Tn-C. The binding of calcium to Tn-C abolishes the inhibitory action of Tn on actin filaments. This Homo sapiens (Human) protein is Troponin C, skeletal muscle (TNNC2).